Reading from the N-terminus, the 700-residue chain is mRNA cap guanine-N(7) methyltransferase (700 aa).

2 stretches are compositionally biased toward basic and acidic residues: residues Met-1–Asp-10 and Glu-52–Arg-67. Disordered regions lie at residues Met-1–Arg-263 and Ala-277–Lys-392. Over residues Arg-113–Leu-128 the composition is skewed to polar residues. Low complexity-rich tracts occupy residues Pro-129–Pro-144 and Pro-220–His-241. Positions Ser-429–Met-700 constitute an mRNA cap 0 methyltransferase domain. Residue Asn-438–Asn-439 coordinates mRNA. S-adenosyl-L-methionine-binding residues include Lys-442, Gly-461, Asp-483, Asp-512, Gln-538, and Tyr-543.

It belongs to the class I-like SAM-binding methyltransferase superfamily. mRNA cap 0 methyltransferase family.

The protein localises to the nucleus. It catalyses the reaction a 5'-end (5'-triphosphoguanosine)-ribonucleoside in mRNA + S-adenosyl-L-methionine = a 5'-end (N(7)-methyl 5'-triphosphoguanosine)-ribonucleoside in mRNA + S-adenosyl-L-homocysteine. Responsible for methylating the 5'-cap structure of mRNAs. The polypeptide is mRNA cap guanine-N(7) methyltransferase (ABD1) (Cryptococcus neoformans var. neoformans serotype D (strain B-3501A) (Filobasidiella neoformans)).